The chain runs to 231 residues: Coproheme decarboxylase (231 aa).

Residue lysine 44 forms an Isoglutamyl lysine isopeptide (Lys-Gln) (interchain with Q-Cter in protein Pup) linkage. Residue tyrosine 133 is part of the active site. Histidine 156 is a Fe-coproporphyrin III binding site.

This sequence belongs to the ChdC family. Type 2 subfamily. The cofactor is Fe-coproporphyrin III.

It catalyses the reaction Fe-coproporphyrin III + 2 H2O2 + 2 H(+) = heme b + 2 CO2 + 4 H2O. The enzyme catalyses Fe-coproporphyrin III + H2O2 + H(+) = harderoheme III + CO2 + 2 H2O. The catalysed reaction is harderoheme III + H2O2 + H(+) = heme b + CO2 + 2 H2O. Its pathway is porphyrin-containing compound metabolism; protoheme biosynthesis. Its function is as follows. Involved in coproporphyrin-dependent heme b biosynthesis. Catalyzes the decarboxylation of Fe-coproporphyrin III (coproheme) to heme b (protoheme IX), the last step of the pathway. The reaction occurs in a stepwise manner with a three-propionate intermediate. The protein is Coproheme decarboxylase of Mycolicibacterium smegmatis (strain ATCC 700084 / mc(2)155) (Mycobacterium smegmatis).